The following is a 257-amino-acid chain: UPF0246 protein VCM66_2278 (257 aa).

The protein belongs to the UPF0246 family.

The sequence is that of UPF0246 protein VCM66_2278 from Vibrio cholerae serotype O1 (strain M66-2).